An 860-amino-acid polypeptide reads, in one-letter code: Leucine--tRNA ligase (860 aa).

Residues 42–52 carry the 'HIGH' region motif; that stretch reads PYPSGRLHMGH. Positions 619-623 match the 'KMSKS' region motif; that stretch reads KMSKS. Lysine 622 provides a ligand contact to ATP.

The protein belongs to the class-I aminoacyl-tRNA synthetase family.

The protein localises to the cytoplasm. It catalyses the reaction tRNA(Leu) + L-leucine + ATP = L-leucyl-tRNA(Leu) + AMP + diphosphate. The sequence is that of Leucine--tRNA ligase from Yersinia pseudotuberculosis serotype O:3 (strain YPIII).